The primary structure comprises 246 residues: MSDLTSPSITAVRDLREASCGPIGAPAVTSDLSENVILTSLDDLHNWARLSSLWPLLYGTACCFIEFAALLGSRFDFDRFGLVPRSSPRQADLLIVAGTVTMKMAPALVRLYEQMPEPKYVIAMGACTITGGMFSADSTTAVRGVDKLIPVDLYMPGCPPRPEAIFDAVIKLRKKVGDESLAERRKHVQTHRYFTVSHQMKRVEEQVTGSYLRAETQKAALAAAPAGQTLATDAAVLTPALEAVES.

C62, C63, C127, and C158 together coordinate [4Fe-4S] cluster.

Belongs to the complex I 20 kDa subunit family. As to quaternary structure, NDH-1 can be composed of about 15 different subunits; different subcomplexes with different compositions have been identified which probably have different functions. It depends on [4Fe-4S] cluster as a cofactor.

The protein localises to the cellular thylakoid membrane. The enzyme catalyses a plastoquinone + NADH + (n+1) H(+)(in) = a plastoquinol + NAD(+) + n H(+)(out). The catalysed reaction is a plastoquinone + NADPH + (n+1) H(+)(in) = a plastoquinol + NADP(+) + n H(+)(out). In terms of biological role, NDH-1 shuttles electrons from an unknown electron donor, via FMN and iron-sulfur (Fe-S) centers, to quinones in the respiratory and/or the photosynthetic chain. The immediate electron acceptor for the enzyme in this species is believed to be plastoquinone. Couples the redox reaction to proton translocation, and thus conserves the redox energy in a proton gradient. Cyanobacterial NDH-1 also plays a role in inorganic carbon-concentration. This chain is NAD(P)H-quinone oxidoreductase subunit K, found in Parasynechococcus marenigrum (strain WH8102).